Consider the following 1638-residue polypeptide: DNA polymerase III PolC-type (1638 aa).

The interval 193-212 (SEIKKQRSEERESKNTREAK) is disordered. The segment covering 194-212 (EIKKQRSEERESKNTREAK) has biased composition (basic and acidic residues). In terms of domain architecture, Exonuclease spans 596-752 (YVVFDVETTG…FDAEATGRLL (157 aa)).

This sequence belongs to the DNA polymerase type-C family. PolC subfamily.

Its subcellular location is the cytoplasm. The catalysed reaction is DNA(n) + a 2'-deoxyribonucleoside 5'-triphosphate = DNA(n+1) + diphosphate. In terms of biological role, required for replicative DNA synthesis. This DNA polymerase also exhibits 3' to 5' exonuclease activity. This is DNA polymerase III PolC-type from Lactococcus lactis subsp. lactis (strain IL1403) (Streptococcus lactis).